The primary structure comprises 338 residues: Cytochrome bd ubiquinol oxidase subunit 2 (338 aa).

Helical transmembrane passes span 7–27 (LWFI…GFDF), 50–70 (IGPF…AIFA), 75–95 (WYAT…LALM), 119–139 (VVFF…TTLF), 163–183 (ILGG…FITL), 196–216 (MAQK…ALSA), 227–247 (EITI…AVFI), 256–276 (FGMT…SLFP), and 306–326 (IAAL…YYVF).

The protein belongs to the cytochrome ubiquinol oxidase subunit 2 family. In terms of assembly, heterodimer of subunits I and II. Requires heme b as cofactor. The cofactor is heme d cis-diol.

Its subcellular location is the cell membrane. It carries out the reaction 2 a ubiquinol + O2(in) + 4 H(+)(in) = 2 a ubiquinone + 2 H2O(in) + 4 H(+)(out). The chain is Cytochrome bd ubiquinol oxidase subunit 2 (cydB) from Bacillus subtilis (strain 168).